The chain runs to 141 residues: Large ribosomal subunit protein uL11 (141 aa).

This sequence belongs to the universal ribosomal protein uL11 family. As to quaternary structure, part of the ribosomal stalk of the 50S ribosomal subunit. Interacts with L10 and the large rRNA to form the base of the stalk. L10 forms an elongated spine to which L12 dimers bind in a sequential fashion forming a multimeric L10(L12)X complex. In terms of processing, one or more lysine residues are methylated.

Forms part of the ribosomal stalk which helps the ribosome interact with GTP-bound translation factors. In Streptococcus sanguinis (strain SK36), this protein is Large ribosomal subunit protein uL11.